Reading from the N-terminus, the 354-residue chain is Guanine nucleotide-binding protein G(o) subunit alpha (354 aa).

A lipid anchor (N-myristoyl glycine) is attached at Gly-2. Cys-3 carries the S-palmitoyl cysteine lipid modification. Positions Lys-32–Tyr-354 constitute a G-alpha domain. Residues Lys-35 to Thr-48 are G1 motif. GTP contacts are provided by residues Gly-40–Ser-47, Leu-176–Thr-182, Asp-201–Gln-205, Asn-270–Asp-273, and Ala-326. Ser-47 and Thr-182 together coordinate Mg(2+). Positions Asp-174–Thr-182 are G2 motif. The interval Phe-197 to Arg-206 is G3 motif. The segment at Ile-266–Asp-273 is G4 motif. Positions Thr-324–Thr-329 are G5 motif.

It belongs to the G-alpha family. G(i/o/t/z) subfamily. In terms of assembly, g proteins are composed of 3 units; alpha, beta and gamma. The alpha chain contains the guanine nucleotide binding site. Interacts (in GDP-bound form) with gpr-1; gpr-1 forms a complex with gpr-2 and lin-5. Interacts (in GDP-bound form) with gpb-1. Interacts (in GDP-bound form) with gbas-1 (via GBA motif); the interaction leads to activation of goa-1. Expressed in the ASER neuron and the intestine.

In terms of biological role, guanine nucleotide-binding proteins (G proteins) are involved as modulators or transducers in various transmembrane signaling systems. In the 1-cell embryo, probably together with gpa-16, controls nuclear rotation and spindle elongation during mitosis. During the first embryonic cell divisions, plays a role in gpr-1/2 cortical localization and in the proper orientation of EMS blastomere mitotic spindle. Polarity determinants (par genes) may regulate lin-5/gpr-1/gpr-2/goa-1 locally to create the asymmetric forces that drive spindle movement. Involved in chemosensory responses to attractive and repellent odors detected by AWC and AWB sensory neurons, respectively. In ASER neurons, acts downstream of glr-3 to regulate cold avoidance behavior via calcium signaling, and it may also play a role in sensing cold in the intestine. Negatively regulates axon regeneration after injury downstream of the inhibitory compound arachidonoyl ethanolamide (AEA) by antagonizing the activation of the JNK pathway (mlk-1/mek-1/kgb-1). In neurons, may negatively regulate diacylglycerol (DAG) production mediated by egl-30 signaling cascade and thereby negatively regulates acetylcholine release. Couples to the muscarinic acetylcholine receptor gar-2 to negatively regulate cholinergic receptor activity in the presence of high levels of acetylcholine in ventral cord motor neurons. Plays a role in the navigational capacity of sperm and the targeting of sperm derived from males to the fertilization site in the uterus of hermaphrodites. Involved in egg-laying and in regulating dopamine-mediated locomotion. Most likely couples to the dopamine receptors dop-2 and dop-3 to positively regulate the dopamine-mediated suppression of crh-1/CREB1 transcription factor activation in cholinergic SIA neurons in the presence of food. This is Guanine nucleotide-binding protein G(o) subunit alpha from Caenorhabditis elegans.